The chain runs to 63 residues: Large ribosomal subunit protein uL29 (63 aa).

This sequence belongs to the universal ribosomal protein uL29 family.

This chain is Large ribosomal subunit protein uL29, found in Klebsiella pneumoniae (strain 342).